Reading from the N-terminus, the 336-residue chain is uncharacterized protein (336 aa).

K39 and Y166 together coordinate NADP(+).

The protein belongs to the NAD(P)-dependent epimerase/dehydratase family. Dihydroflavonol-4-reductase subfamily.

It is found in the cytoplasm. The protein resides in the nucleus. This is an uncharacterized protein from Schizosaccharomyces pombe (strain 972 / ATCC 24843) (Fission yeast).